The following is a 683-amino-acid chain: Protein kinase C eta type (683 aa).

Residues 1–118 (MSSGTMKFNG…LRTAGTSDTF (118 aa)) form the C2 domain. Serine 28 and serine 32 each carry phosphoserine. 2 Phorbol-ester/DAG-type zinc fingers span residues 171–222 (GHKF…VTAC) and 245–295 (PHKF…APNC). At serine 317 the chain carries Phosphoserine. The 260-residue stretch at 355–614 (FEFIRVLGKG…EHEILRHPFF (260 aa)) folds into the Protein kinase domain. Residues 361-369 (LGKGSFGKV) and lysine 384 each bind ATP. Aspartate 479 acts as the Proton acceptor in catalysis. Phosphothreonine; by PDPK1 is present on threonine 513. Residues 615-683 (KEIDWAQLNH…FSYVSPELQL (69 aa)) enclose the AGC-kinase C-terminal domain. Residue threonine 656 is modified to Phosphothreonine. At serine 675 the chain carries Phosphoserine.

The protein belongs to the protein kinase superfamily. AGC Ser/Thr protein kinase family. PKC subfamily. Interacts with FYN. Interacts with RALA. Interacts with DGKQ. As to expression, predominantly expressed in lung and skin.

It is found in the cytoplasm. It catalyses the reaction L-seryl-[protein] + ATP = O-phospho-L-seryl-[protein] + ADP + H(+). The catalysed reaction is L-threonyl-[protein] + ATP = O-phospho-L-threonyl-[protein] + ADP + H(+). Its activity is regulated as follows. Novel PKCs (PRKCD, PRKCE, PRKCH and PRKCQ) are calcium-insensitive, but activated by diacylglycerol (DAG) and phosphatidylserine. Three specific sites; Thr-513 (activation loop of the kinase domain), Thr-656 (turn motif) and Ser-675 (hydrophobic region), need to be phosphorylated for its full activation. In terms of biological role, calcium-independent, phospholipid- and diacylglycerol (DAG)-dependent serine/threonine-protein kinase that is involved in the regulation of cell differentiation in keratinocytes and pre-B cell receptor, mediates regulation of epithelial tight junction integrity and foam cell formation, and is required for glioblastoma proliferation and apoptosis prevention in MCF-7 cells. In keratinocytes, binds and activates the tyrosine kinase FYN, which in turn blocks epidermal growth factor receptor (EGFR) signaling and leads to keratinocyte growth arrest and differentiation. Associates with the cyclin CCNE1-CDK2-CDKN1B complex and inhibits CDK2 kinase activity, leading to RB1 dephosphorylation and thereby G1 arrest in keratinocytes. In association with RALA activates actin depolymerization, which is necessary for keratinocyte differentiation. In the pre-B cell receptor signaling, functions downstream of BLNK by up-regulating IRF4, which in turn activates L chain gene rearrangement. Regulates epithelial tight junctions (TJs) by phosphorylating occludin (OCLN) on threonine residues, which is necessary for the assembly and maintenance of TJs. In association with PLD2 and via TLR4 signaling, is involved in lipopolysaccharide (LPS)-induced RGS2 down-regulation and foam cell formation. Upon PMA stimulation, mediates glioblastoma cell proliferation by activating the mTOR pathway, the PI3K/AKT pathway and the ERK1-dependent phosphorylation of ELK1. Involved in the protection of glioblastoma cells from irradiation-induced apoptosis by preventing caspase-9 activation. In camptothecin-treated MCF-7 cells, regulates NF-kappa-B upstream signaling by activating IKBKB, and confers protection against DNA damage-induced apoptosis. Promotes oncogenic functions of ATF2 in the nucleus while blocking its apoptotic function at mitochondria. Phosphorylates ATF2 which promotes its nuclear retention and transcriptional activity and negatively regulates its mitochondrial localization. This chain is Protein kinase C eta type (Prkch), found in Mus musculus (Mouse).